A 209-amino-acid polypeptide reads, in one-letter code: Putative thymidylate synthase (209 aa).

Residue C137 is part of the active site.

It belongs to the thymidylate synthase family. Archaeal-type ThyA subfamily. As to quaternary structure, monomer.

The protein resides in the cytoplasm. The protein operates within pyrimidine metabolism; dTTP biosynthesis. Its function is as follows. May catalyze the biosynthesis of dTMP using an unknown cosubstrate. This chain is Putative thymidylate synthase, found in Methanopyrus kandleri (strain AV19 / DSM 6324 / JCM 9639 / NBRC 100938).